The sequence spans 1060 residues: Outer capsid protein VP2 (1060 aa).

Belongs to the orbivirus VP2 family.

It is found in the virion. Its function is as follows. The VP2 protein is one of the two proteins (with VP5) which constitute the virus particle outer capsid. It is the major target of the host immunogenic response. The protein is Outer capsid protein VP2 (Segment-2) of Camelus dromedarius (Dromedary).